We begin with the raw amino-acid sequence, 315 residues long: MQKPWVEKYRPETLSEVVGHHEIIKRLTNYVEKKSMPHLLFSGSPGVGKTTAALALAKDLYGDTWRENFLELNSSDERGIDVIRTKVKDFARTKPIGDAPFKVIFLDESDALTSDAQNALRRTMEKYSDICRFILSCNYPSKIIPPIQSRCAIFRFSPLKTEDLVENLKDISEKENLNLEKGGIDAIIYVSEGDMRKAINVLQTAAAVSDEITEEIVYKVASKARPDEIKKMTQLALNGKFVEAREQLYNLMIDWGMSGEDILIQVFREVPNLDISEKEKVHLVEAIGECDFRIVEGSNERIQLSALLAKMGILE.

Position 43 to 50 (43 to 50) interacts with ATP; the sequence is GSPGVGKT.

The protein belongs to the activator 1 small subunits family. RfcS subfamily. In terms of assembly, heteromultimer composed of small subunits (RfcS) and large subunits (RfcL).

Part of the RFC clamp loader complex which loads the PCNA sliding clamp onto DNA. This is Replication factor C small subunit from Methanococcus maripaludis (strain DSM 14266 / JCM 13030 / NBRC 101832 / S2 / LL).